A 26-amino-acid chain; its full sequence is Hainantoxin F1-31.97 (26 aa).

2 disulfides stabilise this stretch: Cys-2-Cys-16 and Cys-9-Cys-21.

Belongs to the neurotoxin 10 (Hwtx-1) family. 17 (Hntx-9) subfamily. As to expression, expressed by the venom gland.

It is found in the secreted. Its function is as follows. Ion channel inhibitor. The polypeptide is Hainantoxin F1-31.97 (Cyriopagopus hainanus (Chinese bird spider)).